A 359-amino-acid polypeptide reads, in one-letter code: DNA polymerase IV (359 aa).

Residues Ile4–Gly184 form the UmuC domain. Mg(2+)-binding residues include Asp8 and Asp102. The active site involves Glu103.

Belongs to the DNA polymerase type-Y family. In terms of assembly, monomer. Mg(2+) serves as cofactor.

It is found in the cytoplasm. The catalysed reaction is DNA(n) + a 2'-deoxyribonucleoside 5'-triphosphate = DNA(n+1) + diphosphate. Poorly processive, error-prone DNA polymerase involved in untargeted mutagenesis. Copies undamaged DNA at stalled replication forks, which arise in vivo from mismatched or misaligned primer ends. These misaligned primers can be extended by PolIV. Exhibits no 3'-5' exonuclease (proofreading) activity. May be involved in translesional synthesis, in conjunction with the beta clamp from PolIII. This Xanthomonas campestris pv. campestris (strain 8004) protein is DNA polymerase IV.